The sequence spans 144 residues: Large ribosomal subunit protein uL15 (144 aa).

Residues 1–54 form a disordered region; sequence MRLNTLSPAEGSKKAGKRLGRGIGSGLGKTGGRGHKGQKSRSGGGVRRGFEGGQ. The span at 21 to 31 shows a compositional bias: gly residues; that stretch reads RGIGSGLGKTG.

Belongs to the universal ribosomal protein uL15 family. Part of the 50S ribosomal subunit.

Its function is as follows. Binds to the 23S rRNA. This is Large ribosomal subunit protein uL15 from Escherichia coli (strain K12 / MC4100 / BW2952).